The sequence spans 291 residues: MASKQLKLVIITGMSGAGKTVAMQSLEDLGYFCVDNLPPSLLPKFWELMKESDKMDKIALVMDLRGREFFDSIEPALDELDNTNFITTKILFLEADDKVLVSRYKETRRHHPLEPNGSVLDGINAERELLSDLKGRSQLVINTSNMAPRELRERINNEFQTEDKDIFNVQLMSFGFKYGIPIDADLVFDVRFLPNPHYIDKMRPLTGLDEDVYEYVMKWPETQTFLDKLVDLLMFTLPFYKREGKTQLVIAIGCTGGQHRSVALTEFVGKTIQQKYETTISHRDMKRRKGR.

13-20 (GMSGAGKT) is an ATP binding site. 63–66 (DLRG) contributes to the GTP binding site.

This sequence belongs to the RapZ-like family.

In terms of biological role, displays ATPase and GTPase activities. The chain is Nucleotide-binding protein lmo2474 from Listeria monocytogenes serovar 1/2a (strain ATCC BAA-679 / EGD-e).